The sequence spans 189 residues: Putative manganese efflux pump MntP (189 aa).

The next 6 helical transmembrane spans lie at 8-28 (FLSL…GFSI), 39-59 (IALF…SAGL), 65-85 (ISSF…GKMI), 106-126 (LTTL…GLSV), 131-151 (ILLA…IGVF), and 166-186 (IVGG…HLGF).

The protein belongs to the MntP (TC 9.B.29) family.

The protein resides in the cell inner membrane. Functionally, probably functions as a manganese efflux pump. The sequence is that of Putative manganese efflux pump MntP from Gloeothece citriformis (strain PCC 7424) (Cyanothece sp. (strain PCC 7424)).